Reading from the N-terminus, the 151-residue chain is Ribosome maturation factor RimP (151 aa).

This sequence belongs to the RimP family.

The protein localises to the cytoplasm. Required for maturation of 30S ribosomal subunits. This Photobacterium profundum (strain SS9) protein is Ribosome maturation factor RimP.